Reading from the N-terminus, the 237-residue chain is UPF0280 protein Mbur_0309 (237 aa).

Belongs to the UPF0280 family.

This chain is UPF0280 protein Mbur_0309, found in Methanococcoides burtonii (strain DSM 6242 / NBRC 107633 / OCM 468 / ACE-M).